Reading from the N-terminus, the 453-residue chain is UPF0210 protein Mbur_0828 (453 aa).

This sequence belongs to the UPF0210 family.

This is UPF0210 protein Mbur_0828 from Methanococcoides burtonii (strain DSM 6242 / NBRC 107633 / OCM 468 / ACE-M).